Reading from the N-terminus, the 514-residue chain is Photosystem II CP47 reaction center protein (514 aa).

6 helical membrane-spanning segments follow: residues 21-36 (AVHL…WAGS), 109-123 (IVLS…VWHW), 148-164 (GGHL…FGTF), 211-226 (IAAG…FHLT), 245-260 (ALAS…AFVV), and 465-480 (CFAL…HGAR).

Belongs to the PsbB/PsbC family. PsbB subfamily. In terms of assembly, PSII is composed of 1 copy each of membrane proteins PsbA, PsbB, PsbC, PsbD, PsbE, PsbF, PsbH, PsbI, PsbJ, PsbK, PsbL, PsbM, PsbT, PsbX, PsbY, PsbZ, Psb30/Ycf12, peripheral proteins PsbO, CyanoQ (PsbQ), PsbU, PsbV and a large number of cofactors. It forms dimeric complexes. The cofactor is Binds multiple chlorophylls. PSII binds additional chlorophylls, carotenoids and specific lipids..

It is found in the cellular thylakoid membrane. Its function is as follows. One of the components of the core complex of photosystem II (PSII). It binds chlorophyll and helps catalyze the primary light-induced photochemical processes of PSII. PSII is a light-driven water:plastoquinone oxidoreductase, using light energy to abstract electrons from H(2)O, generating O(2) and a proton gradient subsequently used for ATP formation. This chain is Photosystem II CP47 reaction center protein, found in Prochlorothrix hollandica.